A 558-amino-acid polypeptide reads, in one-letter code: MAKLLSCVLGPRLYKIYRERDSERAPSSVPGTPTSVTNPHSSSWDTYYQPRALEKHADSILALASVFWSISYYSSPFAFFYLYRKGYLSLSKVVPFSHYAGTLLLLLAGVACLRGIGRWTNPQYRQFITILEATHRNHSAENKRQLANYNFDFRSWPVDFHWEEPSSRKESRGGPSRRGVALLRPEPLHRGTADTFLNRVKKLPCQITSYLVAHTLGRRMLYPGSVYLLQKALMPVLLQGQARLVEECHGRRAKLLACDGNEIDTMFVDRRGTAEPQGQKLVICCEGNAGFYEVGCVSTPLEAGYSVLGWNHPGFAGSTGVPFPQNEANAMDVVVQFAIHRLGFQPEDIILYAWSIGGFTATWAAMSYPDISAVILDASFDDLVPLALKVMPDSWRGLVTRTVRQHLNLNNAEQLCRYQGPVLLIRRTRDEIITTTVPEDIMSNRGNDLLLKFLQHRYPRVMAEEGLRVVRQWLEASSQLEEASIYSRWEVEEDWCLSVLRSYQAEHGPEFPWSVGEDMSADGRRQLALFLAQKHLNNFEATHCTPLPAQNFQMPWHL.

The next 2 membrane-spanning stretches (helical) occupy residues 60-80 (ILAL…FAFF) and 93-113 (VVPF…VACL). At 114–558 (RGIGRWTNPQ…AQNFQMPWHL (445 aa)) the chain is on the cytoplasmic side. Positions 281 to 407 (LVICCEGNAG…LVTRTVRQHL (127 aa)) constitute an AB hydrolase-1 domain. Active-site charge relay system residues include Ser355, Asp430, and His507.

The protein belongs to the AB hydrolase superfamily. ABHD16 family.

It localises to the membrane. The catalysed reaction is 1-heptadecanoyl-2-(5Z,8Z,11Z,14Z-eicosatetraenoyl)-sn-glycero-3-phosphoserine + H2O = 1-heptadecanoyl-sn-glycero-3-phosphoserine + (5Z,8Z,11Z,14Z)-eicosatetraenoate + H(+). It catalyses the reaction 1-hexadecanoyl-2-(9Z-octadecenoyl)-sn-glycero-3-phospho-L-serine + H2O = 1-hexadecanoyl-sn-glycero-3-phospho-L-serine + (9Z)-octadecenoate + H(+). It carries out the reaction 1-octadecanoyl-2-(9Z,12Z-octadecadienoyl)-sn-glycero-3-phosphoserine + H2O = 1-octadecanoyl-sn-glycero-3-phosphoserine + (9Z,12Z)-octadecadienoate + H(+). The enzyme catalyses 1-heptadecanoyl-2-(5Z,8Z,11Z,14Z-eicosatetraenoyl)-sn-glycero-3-phosphocholine + H2O = 1-heptadecanoyl-sn-glycero-3-phosphocholine + (5Z,8Z,11Z,14Z)-eicosatetraenoate + H(+). The catalysed reaction is 1-hexadecanoyl-2-(9Z-octadecenoyl)-sn-glycero-3-phosphoglycerol + H2O = 1-hexadecanoyl-sn-glycero-3-phosphoglycerol + (9Z)-octadecenoate + H(+). It catalyses the reaction 1-hexadecanoyl-2-(9Z-octadecenoyl)-sn-glycero-3-phospho-(1D-myo-inositol) + H2O = 1-hexadecanoyl-sn-glycero-3-phospho-(1D-myo-inositol) + (9Z)-octadecenoate + H(+). It carries out the reaction 1-heptadecanoyl-2-(5Z,8Z,11Z,14Z-eicosatetraenoyl)-sn-glycero-3-phosphoethanolamine + H2O = 1-heptadecanoyl-sn-glycero-3-phosphoethanolamine + (5Z,8Z,11Z,14Z)-eicosatetraenoate + H(+). The enzyme catalyses 1-hexadecanoyl-2-(9Z-octadecenoyl)-sn-glycero-3-phospho-(1'-sn-glycerol) + H2O = 1-hexadecanoyl-sn-glycero-3-phospho-(1'-sn-glycerol) + (9Z)-octadecenoate + H(+). The catalysed reaction is Hydrolyzes glycerol monoesters of long-chain fatty acids.. It catalyses the reaction 1-tetradecanoylglycerol + H2O = tetradecanoate + glycerol + H(+). It carries out the reaction 2-hexadecanoylglycerol + H2O = glycerol + hexadecanoate + H(+). The enzyme catalyses 1-(9Z-octadecenoyl)-glycerol + H2O = glycerol + (9Z)-octadecenoate + H(+). The catalysed reaction is 2-(9Z-octadecenoyl)-glycerol + H2O = glycerol + (9Z)-octadecenoate + H(+). It catalyses the reaction 2-(9Z,12Z-octadecadienoyl)-glycerol + H2O = (9Z,12Z)-octadecadienoate + glycerol + H(+). It carries out the reaction 1-(5Z,8Z,11Z,14Z-eicosatetraenoyl)-glycerol + H2O = glycerol + (5Z,8Z,11Z,14Z)-eicosatetraenoate + H(+). The enzyme catalyses 2-(5Z,8Z,11Z,14Z-eicosatetraenoyl)-glycerol + H2O = glycerol + (5Z,8Z,11Z,14Z)-eicosatetraenoate + H(+). The catalysed reaction is prostaglandin D2-1-glycerol ester + H2O = prostaglandin D2 + glycerol + H(+). It catalyses the reaction 2-glyceryl-15-deoxy-Delta(12,14)-prostaglandin J2 + H2O = 15-deoxy-Delta(12,14)-prostaglandin J2 + glycerol + H(+). It carries out the reaction 1-(9Z,12Z-octadecadienoyl)-glycerol + H2O = (9Z,12Z)-octadecadienoate + glycerol + H(+). Phosphatidylserine (PS) lipase that mediates the hydrolysis of phosphatidylserine to generate lysophosphatidylserine (LPS). LPS constitutes a class of signaling lipids that regulates immunological and neurological processes. Has no activity towards diacylglycerol, triacylglycerol or lysophosphatidylserine lipase. Also has monoacylglycerol lipase activity, with preference for 1-(9Z,12Z-octadecadienoyl)-glycerol (1-LG) and 2-glyceryl-15-deoxy-Delta(12,14)-prostaglandin J2 (15d-PGJ(2)-G). The sequence is that of Phosphatidylserine lipase ABHD16A from Bos taurus (Bovine).